The following is a 127-amino-acid chain: Large ribosomal subunit protein bL12 (127 aa).

Belongs to the bacterial ribosomal protein bL12 family. In terms of assembly, homodimer. Part of the ribosomal stalk of the 50S ribosomal subunit. Forms a multimeric L10(L12)X complex, where L10 forms an elongated spine to which 2 to 4 L12 dimers bind in a sequential fashion. Binds GTP-bound translation factors.

Forms part of the ribosomal stalk which helps the ribosome interact with GTP-bound translation factors. Is thus essential for accurate translation. The chain is Large ribosomal subunit protein bL12 from Thiobacillus denitrificans (strain ATCC 25259 / T1).